Reading from the N-terminus, the 537-residue chain is CTP synthase (537 aa).

An amidoligase domain region spans residues 1–267 (MTKYIFVTGG…DQIVCDHLKL (267 aa)). Residue S13 coordinates CTP. A UTP-binding site is contributed by S13. 14–19 (SIGKGI) is an ATP binding site. Y54 is an L-glutamine binding site. Position 71 (D71) interacts with ATP. Positions 71 and 141 each coordinate Mg(2+). Residues 148-150 (DIE), 188-193 (KTKPTQ), and K224 contribute to the CTP site. Residues 188-193 (KTKPTQ) and K224 contribute to the UTP site. 240–242 (RDV) serves as a coordination point for ATP. The region spanning 292 to 535 (RIALVGKYVE…VTAAVKNKNQ (244 aa)) is the Glutamine amidotransferase type-1 domain. G354 contributes to the L-glutamine binding site. Residue C381 is the Nucleophile; for glutamine hydrolysis of the active site. L-glutamine is bound by residues 382 to 385 (LGMQ), E405, and R463. Residues H508 and E510 contribute to the active site.

The protein belongs to the CTP synthase family. In terms of assembly, homotetramer.

The enzyme catalyses UTP + L-glutamine + ATP + H2O = CTP + L-glutamate + ADP + phosphate + 2 H(+). The catalysed reaction is L-glutamine + H2O = L-glutamate + NH4(+). It carries out the reaction UTP + NH4(+) + ATP = CTP + ADP + phosphate + 2 H(+). Its pathway is pyrimidine metabolism; CTP biosynthesis via de novo pathway; CTP from UDP: step 2/2. Allosterically activated by GTP, when glutamine is the substrate; GTP has no effect on the reaction when ammonia is the substrate. The allosteric effector GTP functions by stabilizing the protein conformation that binds the tetrahedral intermediate(s) formed during glutamine hydrolysis. Inhibited by the product CTP, via allosteric rather than competitive inhibition. In terms of biological role, catalyzes the ATP-dependent amination of UTP to CTP with either L-glutamine or ammonia as the source of nitrogen. Regulates intracellular CTP levels through interactions with the four ribonucleotide triphosphates. The chain is CTP synthase from Streptococcus equi subsp. zooepidemicus (strain H70).